The sequence spans 298 residues: uncharacterized protein (298 aa).

It localises to the cytoplasm. The protein resides in the nucleus. This is an uncharacterized protein from Schizosaccharomyces pombe (strain 972 / ATCC 24843) (Fission yeast).